Consider the following 460-residue polypeptide: UDP-N-acetylmuramoylalanine--D-glutamate ligase (460 aa).

122–128 (GSNGKST) provides a ligand contact to ATP.

It belongs to the MurCDEF family.

It is found in the cytoplasm. It carries out the reaction UDP-N-acetyl-alpha-D-muramoyl-L-alanine + D-glutamate + ATP = UDP-N-acetyl-alpha-D-muramoyl-L-alanyl-D-glutamate + ADP + phosphate + H(+). It participates in cell wall biogenesis; peptidoglycan biosynthesis. Its function is as follows. Cell wall formation. Catalyzes the addition of glutamate to the nucleotide precursor UDP-N-acetylmuramoyl-L-alanine (UMA). The polypeptide is UDP-N-acetylmuramoylalanine--D-glutamate ligase (Jannaschia sp. (strain CCS1)).